A 23-amino-acid polypeptide reads, in one-letter code: Phallacidin proprotein (23 aa).

Residue proline 1 is a propeptide. Positions 2–8 (AWLVDCP) form a cross-link, cyclopeptide (Ala-Pro). The 2'-cysteinyl-6'-hydroxytryptophan sulfoxide (Trp-Cys) cross-link spans 3–7 (WLVDC). A propeptide spanning residues 9–23 (CVGDDISRLLTRGEK) is cleaved from the precursor.

Belongs to the MSDIN fungal toxin family. Post-translationally, processed by the macrocyclase-peptidase enzyme POPB to yield a toxic cyclic heptapeptide. POPB first removes 10 residues from the N-terminus. Conformational trapping of the remaining peptide forces the enzyme to release this intermediate rather than proceed to macrocyclization. The enzyme rebinds the remaining peptide in a different conformation and catalyzes macrocyclization of the N-terminal 7 residues.

In terms of biological role, major toxin that belongs to the bicyclic heptapeptides called phallotoxins. Although structurally related to amatoxins, phallotoxins have a different mode of action, which is the stabilization of F-actin. Phallotoxins are poisonous when administered parenterally, but not orally because of poor absorption. The sequence is that of Phallacidin proprotein from Amanita rimosa.